The following is a 135-amino-acid chain: Ribosome-binding factor A (135 aa).

This sequence belongs to the RbfA family. As to quaternary structure, monomer. Binds 30S ribosomal subunits, but not 50S ribosomal subunits or 70S ribosomes.

The protein localises to the cytoplasm. Its function is as follows. One of several proteins that assist in the late maturation steps of the functional core of the 30S ribosomal subunit. Associates with free 30S ribosomal subunits (but not with 30S subunits that are part of 70S ribosomes or polysomes). Required for efficient processing of 16S rRNA. May interact with the 5'-terminal helix region of 16S rRNA. This Hahella chejuensis (strain KCTC 2396) protein is Ribosome-binding factor A.